We begin with the raw amino-acid sequence, 361 residues long: MERTLDRVGVFAATHAAVAACDPLQARALVLQLPGLNRNKDVPGIVGLLREFLPVRGLPCGWGFVEAAAAMRDIGFFLGSLKRHGHEPAEVVPGLEPVLLDLARATNLPPRETLLHVTVWNPTAADAQRSYTGLPDEAHLLESVRISMAALEAAIALTVELFDVSLRSPEFAQRCDELEAYLQKMVESIVYAYRFISPQVFYDELRPFYEPIRVGGQSYLGPGAVEMPLFVLEHVLWGSQSDDQTYREFKETYLPYVLPAYRAVYARFSGEPALIDRALDEARAVGTRDEHVRAGLTALERVFKVLLRFRAPHLKLAERAYEVGQSGPEIGSGGYAPSMLGELLTLTYAARSRVRAALDES.

222-225 (PGAV) is a binding site for substrate. Heme is bound at residue His313. Tyr321 and Ser332 together coordinate substrate.

Belongs to the PrnB family. As to quaternary structure, monomer. Requires heme b as cofactor.

It carries out the reaction 7-chloro-L-tryptophan + AH2 + O2 = monodechloroaminopyrrolnitrin + A + CO2 + 2 H2O. It participates in antibiotic biosynthesis. Its function is as follows. Involved in the biosynthesis of the antifungal antibiotic pyrrolnitrin. Catalyzes the ring rearrangement and decarboxylation to convert 7-chloro-L-tryptophan (7-CLT) to monodechloroaminopyrrolnitrin (MDA). It can also use 7-chloro-D-tryptophan, but 7-chloro-L-tryptophan is the preferred natural enantiomer. In Pseudomonas fluorescens, this protein is Monodechloroaminopyrrolnitrin synthase PrnB (prnB).